Reading from the N-terminus, the 234-residue chain is Probable septum site-determining protein MinC (234 aa).

Belongs to the MinC family. As to quaternary structure, interacts with MinD and FtsZ.

Cell division inhibitor that blocks the formation of polar Z ring septums. Rapidly oscillates between the poles of the cell to destabilize FtsZ filaments that have formed before they mature into polar Z rings. Prevents FtsZ polymerization. The chain is Probable septum site-determining protein MinC from Pseudoalteromonas translucida (strain TAC 125).